The following is a 1098-amino-acid chain: Early transcription factor large subunit homolog (1098 aa).

In terms of domain architecture, Helicase ATP-binding spans 17 to 317; it reads KGGRAFFPCD…PNGQPLQRQQ (301 aa). Residue 64-71 coordinates ATP; it reads WQTGTGKS. The DEAH box motif lies at 246–249; the sequence is DEIH. A Helicase C-terminal domain is found at 489 to 689; the sequence is MMKDILSIIR…EGDKALRKHA (201 aa).

This sequence belongs to the DEAD box helicase family. DEAH subfamily.

Its subcellular location is the virion. The catalysed reaction is ATP + H2O = ADP + phosphate + H(+). Putative initation factor. This African swine fever virus (isolate Tick/Malawi/Lil 20-1/1983) (ASFV) protein is Early transcription factor large subunit homolog.